Consider the following 481-residue polypeptide: NADH-quinone oxidoreductase subunit N (481 aa).

14 helical membrane-spanning segments follow: residues 11–31 (AIPE…DLFW), 38–58 (LAAV…VFEM), 69–89 (FVLD…VLMV), 107–127 (VFVL…GGSL), 128–148 (LSVY…VAFY), 162–182 (FVLG…LYGL), 203–223 (LVLV…LGAA), 237–257 (PTVV…ALII), 271–291 (WQQI…VIAI), 299–319 (MLAY…VAGT), 327–347 (FFYT…ILLV), 370–390 (YAFL…TVGF), 401–421 (VAAG…IGAF), and 457–477 (LALL…FYAM).

It belongs to the complex I subunit 2 family. In terms of assembly, NDH-1 is composed of 14 different subunits. Subunits NuoA, H, J, K, L, M, N constitute the membrane sector of the complex.

The protein resides in the cell inner membrane. The enzyme catalyses a quinone + NADH + 5 H(+)(in) = a quinol + NAD(+) + 4 H(+)(out). Its function is as follows. NDH-1 shuttles electrons from NADH, via FMN and iron-sulfur (Fe-S) centers, to quinones in the respiratory chain. The immediate electron acceptor for the enzyme in this species is believed to be ubiquinone. Couples the redox reaction to proton translocation (for every two electrons transferred, four hydrogen ions are translocated across the cytoplasmic membrane), and thus conserves the redox energy in a proton gradient. The sequence is that of NADH-quinone oxidoreductase subunit N from Acidithiobacillus ferrooxidans (strain ATCC 23270 / DSM 14882 / CIP 104768 / NCIMB 8455) (Ferrobacillus ferrooxidans (strain ATCC 23270)).